The following is a 150-amino-acid chain: MRHKVAGYKLKRDTAGRNSLLRNLATSVIEAERIVTTVTKAKAVRPLVEHMITLAKTDTLHSRRQAAAVLRTPESVKKLFDTLGTRFGQRNGGYTRIVKLGPRKGDGAEQAMIELVGSELVKRAADRAKRREERLKAQREGRDHEEETDE.

Positions 126–150 (DRAKRREERLKAQREGRDHEEETDE) are disordered.

Belongs to the bacterial ribosomal protein bL17 family. In terms of assembly, part of the 50S ribosomal subunit. Contacts protein L32.

This Solibacter usitatus (strain Ellin6076) protein is Large ribosomal subunit protein bL17.